The primary structure comprises 152 residues: Ribosome maturation factor RimP (152 aa).

It belongs to the RimP family.

The protein resides in the cytoplasm. Its function is as follows. Required for maturation of 30S ribosomal subunits. This chain is Ribosome maturation factor RimP, found in Francisella tularensis subsp. tularensis (strain FSC 198).